Reading from the N-terminus, the 220-residue chain is Guanylate kinase (220 aa).

Residues 11 to 190 (GVLFVLSSPS…CYGEVMAILR (180 aa)) form the Guanylate kinase-like domain. 18–25 (SPSGAGKT) is a binding site for ATP.

The protein belongs to the guanylate kinase family.

It localises to the cytoplasm. It carries out the reaction GMP + ATP = GDP + ADP. Functionally, essential for recycling GMP and indirectly, cGMP. The protein is Guanylate kinase of Sphingopyxis alaskensis (strain DSM 13593 / LMG 18877 / RB2256) (Sphingomonas alaskensis).